The chain runs to 287 residues: Myoblast determination protein 1 homolog B (287 aa).

In terms of domain architecture, bHLH spans 96-147 (DRRRAATMRERRRLSKVNDAFETLKRCTSTNPNQRLPKVDILRNAISYIDSL). 2 disordered regions span residues 161–202 (NMEH…FYTD) and 231–277 (QSPS…QLSH). Residues 168–188 (DSDASSPSSNCSDGMNSPPCS) are compositionally biased toward low complexity. Residues 267–277 (SPGNSCTQLSH) show a composition bias toward polar residues.

In terms of assembly, efficient DNA binding requires dimerization with another bHLH protein.

The protein localises to the nucleus. May act as a transcriptional activator that promotes transcription of muscle-specific target genes and plays a role in muscle differentiation. This chain is Myoblast determination protein 1 homolog B (myod1-b), found in Xenopus laevis (African clawed frog).